Here is a 165-residue protein sequence, read N- to C-terminus: 3-hydroxyacyl-[acyl-carrier-protein] dehydratase FERN, mitochondrial (165 aa).

A mitochondrion-targeting transit peptide spans 1–35 (MLMKRLFSSSHVFSSSSASSNLLKIGSVLKQARTF). The 89-residue stretch at 36 to 124 (ADDDVLGYSK…AVSIRQIKNK (89 aa)) folds into the MaoC-like domain.

In terms of assembly, homodimer.

Its subcellular location is the mitochondrion. It catalyses the reaction a (3R)-hydroxyacyl-[ACP] = a (2E)-enoyl-[ACP] + H2O. Its pathway is lipid metabolism; fatty acid biosynthesis. Functionally, 3-hydroxyl-[acyl-carrier-protein] (3-hydroxyl-ACP) dehydratase required for mitochondrial fatty acid synthesis (mtFAS). Essential for photorespiration, tomato morphogenesis and plant development, probably by influencing mitochondrial membrane lipid composition and other lipid metabolic pathways, and by contributing to energy supply and reactive oxygen species (ROS) homeostasis. In Solanum lycopersicum (Tomato), this protein is 3-hydroxyacyl-[acyl-carrier-protein] dehydratase FERN, mitochondrial.